The sequence spans 334 residues: tRNA U34 carboxymethyltransferase (334 aa).

Residues Lys91, Trp105, Lys110, Gly130, Asp152–Thr154, Ile181–Glu182, Met196, Tyr200, and Arg315 contribute to the carboxy-S-adenosyl-L-methionine site.

This sequence belongs to the class I-like SAM-binding methyltransferase superfamily. CmoB family. Homotetramer.

It carries out the reaction carboxy-S-adenosyl-L-methionine + 5-hydroxyuridine(34) in tRNA = 5-carboxymethoxyuridine(34) in tRNA + S-adenosyl-L-homocysteine + H(+). In terms of biological role, catalyzes carboxymethyl transfer from carboxy-S-adenosyl-L-methionine (Cx-SAM) to 5-hydroxyuridine (ho5U) to form 5-carboxymethoxyuridine (cmo5U) at position 34 in tRNAs. The polypeptide is tRNA U34 carboxymethyltransferase (Klebsiella pneumoniae (strain 342)).